A 428-amino-acid polypeptide reads, in one-letter code: MLGALLLSGAVHAAVQPLDSVVAIVDNDVIMKSQMDQRVREVQQTIAKRGSGVPPAADLQPQVLDRLILENLQLQMGERSGIRVSDDELNQAIGTIAQRNNMSVEQFRAALAHDGLSYEDAREQVRREMIISRVRQRRVAERIQVSEQEVKNFLASDQGKAQLSEEFHLANILIATPDSASSDAIQAAAVKAKSIYDQLKKGADFAKIAATTSSSENALEGGDMGWRKAAQLPPPFGDMLSSMPIGDVTPPARTPGGFIILKLLEKRGGQGQAQMRDEVHVRHILIKPSEIRSEEATKLLAQKIYERIENGEDFATLAKSFSEDPGSALNGGDLNWVDPNSLVPEFRDVMSSTPQGELSKPFKTAYGWHVLEVLGRRATDATGQARDQQALSVLRNRKYDEELQTWLRQIRDEAYVEIKLPGATQAAQ.

Positions 1-13 (MLGALLLSGAVHA) are cleaved as a signal peptide. 2 consecutive PpiC domains span residues 164–265 (SEEF…KLLE) and 276–375 (RDEV…EVLG).

The protein resides in the periplasm. It catalyses the reaction [protein]-peptidylproline (omega=180) = [protein]-peptidylproline (omega=0). Chaperone involved in the correct folding and assembly of outer membrane proteins. Recognizes specific patterns of aromatic residues and the orientation of their side chains, which are found more frequently in integral outer membrane proteins. May act in both early periplasmic and late outer membrane-associated steps of protein maturation. The chain is Chaperone SurA from Pseudomonas syringae pv. tomato (strain ATCC BAA-871 / DC3000).